We begin with the raw amino-acid sequence, 162 residues long: 2-C-methyl-D-erythritol 2,4-cyclodiphosphate synthase (162 aa).

A divalent metal cation contacts are provided by aspartate 10 and histidine 12. Residues 10 to 12 (DVH) and 36 to 37 (HS) each bind 4-CDP-2-C-methyl-D-erythritol 2-phosphate. Histidine 44 contacts a divalent metal cation. 4-CDP-2-C-methyl-D-erythritol 2-phosphate contacts are provided by residues 58–60 (DIG), 63–67 (FSDTD), and arginine 144.

Belongs to the IspF family. In terms of assembly, homotrimer. Requires a divalent metal cation as cofactor.

It catalyses the reaction 4-CDP-2-C-methyl-D-erythritol 2-phosphate = 2-C-methyl-D-erythritol 2,4-cyclic diphosphate + CMP. It functions in the pathway isoprenoid biosynthesis; isopentenyl diphosphate biosynthesis via DXP pathway; isopentenyl diphosphate from 1-deoxy-D-xylulose 5-phosphate: step 4/6. In terms of biological role, involved in the biosynthesis of isopentenyl diphosphate (IPP) and dimethylallyl diphosphate (DMAPP), two major building blocks of isoprenoid compounds. Catalyzes the conversion of 4-diphosphocytidyl-2-C-methyl-D-erythritol 2-phosphate (CDP-ME2P) to 2-C-methyl-D-erythritol 2,4-cyclodiphosphate (ME-CPP) with a corresponding release of cytidine 5-monophosphate (CMP). This Burkholderia thailandensis (strain ATCC 700388 / DSM 13276 / CCUG 48851 / CIP 106301 / E264) protein is 2-C-methyl-D-erythritol 2,4-cyclodiphosphate synthase.